Here is a 53-residue protein sequence, read N- to C-terminus: Conotoxin Bu27 (53 aa).

Residues 1-12 constitute a propeptide that is removed on maturation; sequence ASDGRNAVVHER. A 4-hydroxyproline modification is found at Pro-14. 4-carboxyglutamate is present on Glu-15. 2 O-linked (HexNAc...) threonine glycosylation sites follow: Thr-19 and Thr-21. A 4-hydroxyproline mark is found at Pro-29, Pro-34, Pro-35, Pro-43, Pro-44, and Pro-48. The residue at position 48 (Pro-48) is a Proline amide. Positions 49-53 are excised as a propeptide; sequence GRRND.

It belongs to the conotoxin A superfamily. Post-translationally, contains 3 disulfide bonds. Expressed by the venom duct.

Its subcellular location is the secreted. Functionally, probable neurotoxin with ion channel inhibitor activity. This chain is Conotoxin Bu27, found in Conus bullatus (Bubble cone).